The primary structure comprises 427 residues: UDP-N-acetylglucosamine--N-acetylmuramyl-(pentapeptide) pyrophosphoryl-undecaprenol N-acetylglucosamine transferase (427 aa).

Residues 29–31, Asn-141, Arg-177, Ser-205, Ile-258, and Gln-303 contribute to the UDP-N-acetyl-alpha-D-glucosamine site; that span reads TGG. A disordered region spans residues 408–427; that stretch reads SLHPIPDSRFPIRTSAGGAQ.

It belongs to the glycosyltransferase 28 family. MurG subfamily.

It is found in the cell inner membrane. It catalyses the reaction di-trans,octa-cis-undecaprenyl diphospho-N-acetyl-alpha-D-muramoyl-L-alanyl-D-glutamyl-meso-2,6-diaminopimeloyl-D-alanyl-D-alanine + UDP-N-acetyl-alpha-D-glucosamine = di-trans,octa-cis-undecaprenyl diphospho-[N-acetyl-alpha-D-glucosaminyl-(1-&gt;4)]-N-acetyl-alpha-D-muramoyl-L-alanyl-D-glutamyl-meso-2,6-diaminopimeloyl-D-alanyl-D-alanine + UDP + H(+). It functions in the pathway cell wall biogenesis; peptidoglycan biosynthesis. Functionally, cell wall formation. Catalyzes the transfer of a GlcNAc subunit on undecaprenyl-pyrophosphoryl-MurNAc-pentapeptide (lipid intermediate I) to form undecaprenyl-pyrophosphoryl-MurNAc-(pentapeptide)GlcNAc (lipid intermediate II). In Xanthomonas campestris pv. campestris (strain B100), this protein is UDP-N-acetylglucosamine--N-acetylmuramyl-(pentapeptide) pyrophosphoryl-undecaprenol N-acetylglucosamine transferase.